The sequence spans 396 residues: Subtilisin-like protease 5 (396 aa).

The signal sequence occupies residues 1-20 (MTGFFTILSFSLAALSVTNA). Positions 21-116 (AQILSVPKGA…VEPDAIISQH (96 aa)) are excised as a propeptide. An Inhibitor I9 domain is found at 37–113 (YIVVMKDDTS…VAFVEPDAII (77 aa)). A Peptidase S8 domain is found at 125-396 (PWGLSRLSNR…SRLLYNGSGR (272 aa)). Residues Asp-156 and His-187 each act as charge relay system in the active site. Asn-230 and Asn-248 each carry an N-linked (GlcNAc...) asparagine glycan. The Charge relay system role is filled by Ser-342. The segment covering 376–389 (PTIRNPGPDTTSRL) has biased composition (polar residues). The interval 376–396 (PTIRNPGPDTTSRLLYNGSGR) is disordered. Asn-392 carries an N-linked (GlcNAc...) asparagine glycan.

It belongs to the peptidase S8 family.

The protein resides in the secreted. Functionally, secreted subtilisin-like serine protease with keratinolytic activity that contributes to pathogenicity. This Arthroderma benhamiae (strain ATCC MYA-4681 / CBS 112371) (Trichophyton mentagrophytes) protein is Subtilisin-like protease 5 (SUB5).